The primary structure comprises 476 residues: tRNA(Ile)-lysidine synthase (476 aa).

30-35 (SGGPDS) is a binding site for ATP.

The protein belongs to the tRNA(Ile)-lysidine synthase family.

The protein localises to the cytoplasm. The catalysed reaction is cytidine(34) in tRNA(Ile2) + L-lysine + ATP = lysidine(34) in tRNA(Ile2) + AMP + diphosphate + H(+). In terms of biological role, ligates lysine onto the cytidine present at position 34 of the AUA codon-specific tRNA(Ile) that contains the anticodon CAU, in an ATP-dependent manner. Cytidine is converted to lysidine, thus changing the amino acid specificity of the tRNA from methionine to isoleucine. The chain is tRNA(Ile)-lysidine synthase from Bacillus thuringiensis subsp. konkukian (strain 97-27).